An 818-amino-acid chain; its full sequence is Actin filament-associated protein 1-like 2 (818 aa).

Tyrosine 56 carries the phosphotyrosine modification. Residues 66 to 163 (QNAESQGKAP…SKGKSAPYQW (98 aa)) are disordered. Polar residues predominate over residues 85–94 (EPSQHSSAPQ). Residues 123–139 (YYEEAEPYDTSLNEDGE) show a composition bias toward acidic residues. 2 PH domains span residues 175–271 (DARI…EVSG) and 353–447 (SLET…SESG). The residue at position 408 (serine 408) is a Phosphoserine. Position 413 is a phosphotyrosine (tyrosine 413). Serine 484 is modified (phosphoserine). The segment at 513 to 532 (AAVEPTEEATPVADDPNERE) is disordered. The stretch at 652-749 (AEIKLGKNRT…VKDNLKKAEA (98 aa)) forms a coiled coil. Residues 765-787 (NVSPRPKAVTPASAPDCTPVNSA) form a disordered region.

As to quaternary structure, interacts with SRC. Interacts with LCK when tyrosine phosphorylated. Tyrosine phosphorylated (by SRC). As to expression, detected in spleen and thyroid, and at lower levels in kidney, brain, lung and pancreas.

It localises to the cytoplasm. May play a role in a signaling cascade by enhancing the kinase activity of SRC. Contributes to SRC-regulated transcription activation. The protein is Actin filament-associated protein 1-like 2 (AFAP1L2) of Homo sapiens (Human).